The following is a 139-amino-acid chain: Succinate dehydrogenase assembly factor 2, mitochondrial (139 aa).

A mitochondrion-targeting transit peptide spans 1 to 28; that stretch reads MLRKTNLSNITTLLRSARCMNRMPQLRF.

Belongs to the SDHAF2 family. As to quaternary structure, interacts with the flavoprotein subunit within the SDH catalytic dimer.

It localises to the mitochondrion. The protein localises to the mitochondrion matrix. Plays an essential role in the assembly of succinate dehydrogenase (SDH), an enzyme complex (also referred to as respiratory complex II) that is a component of both the tricarboxylic acid (TCA) cycle and the mitochondrial electron transport chain, and which couples the oxidation of succinate to fumarate with the reduction of ubiquinone (coenzyme Q) to ubiquinol. Required for flavinylation (covalent attachment of FAD) of the flavoprotein subunit of the SDH catalytic dimer. In Schizosaccharomyces pombe (strain 972 / ATCC 24843) (Fission yeast), this protein is Succinate dehydrogenase assembly factor 2, mitochondrial.